Reading from the N-terminus, the 362-residue chain is NAD(P)H-quinone oxidoreductase subunit 1, chloroplastic (362 aa).

The next 7 helical transmembrane spans lie at 26 to 48 (LIWILPIFALLLGITIEVLVIVW), 97 to 119 (FSIGPSIAVISILLSFLVIPLGY), 126 to 148 (LSIGVFLWIAISSIAPIGLLMAG), 163 to 185 (AAAQSISYEIPLTFCVLAISLLS), 254 to 276 (LFYLVSYLNLLVSSLFVTVLYLG), 296 to 318 (IIGILEMVIGIFITLTKAYLFLF), and 338 to 360 (LGWKFLLPISLGNLLLTTSFQLV).

Belongs to the complex I subunit 1 family. As to quaternary structure, NDH is composed of at least 16 different subunits, 5 of which are encoded in the nucleus.

Its subcellular location is the plastid. It is found in the chloroplast thylakoid membrane. The catalysed reaction is a plastoquinone + NADH + (n+1) H(+)(in) = a plastoquinol + NAD(+) + n H(+)(out). The enzyme catalyses a plastoquinone + NADPH + (n+1) H(+)(in) = a plastoquinol + NADP(+) + n H(+)(out). NDH shuttles electrons from NAD(P)H:plastoquinone, via FMN and iron-sulfur (Fe-S) centers, to quinones in the photosynthetic chain and possibly in a chloroplast respiratory chain. The immediate electron acceptor for the enzyme in this species is believed to be plastoquinone. Couples the redox reaction to proton translocation, and thus conserves the redox energy in a proton gradient. In Zea mays (Maize), this protein is NAD(P)H-quinone oxidoreductase subunit 1, chloroplastic (ndhA).